A 180-amino-acid chain; its full sequence is Der GTPase-activating protein YihI (180 aa).

Disordered stretches follow at residues 1 to 90 (MSRK…QERR) and 145 to 180 (EPEE…DYKG). Residues 23–32 (NRTESDVEGR) show a composition bias toward basic and acidic residues. Basic residues predominate over residues 33-43 (LRKRAKKRKGL). Composition is skewed to basic and acidic residues over residues 50–68 (SDAE…DPRL) and 80–90 (PVKKQTKQERR). A compositionally biased stretch (acidic residues) spans 165-180 (DLLADFDDINFDDYKG).

Belongs to the YihI family. In terms of assembly, interacts with Der.

A GTPase-activating protein (GAP) that modifies Der/EngA GTPase function. May play a role in ribosome biogenesis. This is Der GTPase-activating protein YihI from Vibrio campbellii (strain ATCC BAA-1116).